The sequence spans 137 residues: 15 kDa protein A (137 aa).

The first 20 residues, methionine 1–alanine 20, serve as a signal peptide directing secretion. 2 disulfide bridges follow: cysteine 77–cysteine 88 and cysteine 99–cysteine 116.

Belongs to the cathelicidin family. In terms of tissue distribution, large granules of neutrophils.

The protein localises to the secreted. Its function is as follows. Binds to bacterial lipopolysaccharides (LPS), potentiates strongly the early antibacterial effects of BPI. Inhibits the late lethal action of BPI. This is 15 kDa protein A from Oryctolagus cuniculus (Rabbit).